The chain runs to 1240 residues: DNA polymerase II large subunit (1240 aa).

The protein belongs to the archaeal DNA polymerase II family. Heterodimer of a large subunit and a small subunit.

It carries out the reaction DNA(n) + a 2'-deoxyribonucleoside 5'-triphosphate = DNA(n+1) + diphosphate. The catalysed reaction is Exonucleolytic cleavage in the 3'- to 5'-direction to yield nucleoside 5'-phosphates.. Possesses two activities: a DNA synthesis (polymerase) and an exonucleolytic activity that degrades single-stranded DNA in the 3'- to 5'-direction. Has a template-primer preference which is characteristic of a replicative DNA polymerase. This chain is DNA polymerase II large subunit, found in Methanopyrus kandleri (strain AV19 / DSM 6324 / JCM 9639 / NBRC 100938).